The primary structure comprises 550 residues: MTPADLAELLKATAAAVLAERGLDASALPQMVTVERPRIPEHGDYASNLAMQLAKKVGTNPRELAGWLAEALTKVDGIASAEVAGPGFINMRLETAAQAKVVTSVIDAGHSYGHSLLLAGRKVNLEFVSANPTGPIHIGGTRWAAVGDALGRLLTTQGADVVREYYFNDHGAQIDRFANSLIAAAKGEPTPQDGYAGSYITNIAEQVLQKAPDALSLPDAELRETFRAIGVDLMFDHIKQSLHEFGTDFDVYTHEDSMHTGGRVENAIARLRETGNIYEKDGATWLRTSAFGDDKDRVVIKSDGKPAYIAGDLAYYLDKRQRGFDLCIYMLGADHHGYIARLKAAAAAFGDDPATVEVLIGQMVNLVRDGQPVRMSKRAGTVLTLDDLVEAIGVDAARYSLIRSSVDTAIDIDLALWSSASNENPVYYVQYAHARLSALARNAAELALIPDTNHLELLNHDKEGTLLRTLGEFPRVLETAASLREPHRVCRYLEDLAGDYHRFYDSCRVLPQGDEQPTDLHTARLALCQATRQVIANGLAIIGVTAPERM.

A 'HIGH' region motif is present at residues 130-140 (ANPTGPIHIGG).

It belongs to the class-I aminoacyl-tRNA synthetase family. Monomer.

It is found in the cytoplasm. The enzyme catalyses tRNA(Arg) + L-arginine + ATP = L-arginyl-tRNA(Arg) + AMP + diphosphate. This is Arginine--tRNA ligase (argS) from Mycobacterium tuberculosis (strain CDC 1551 / Oshkosh).